The primary structure comprises 263 residues: HTH-type transcriptional repressor NanR (263 aa).

Residues 1–23 (MSPMNAFDPQAEDSTTTIGRNLR) are disordered. In terms of domain architecture, HTH gntR-type spans 30–98 (KKLSEMVEEE…NGERARVSRP (69 aa)). A DNA-binding region (H-T-H motif) is located at residues 58-77 (ERELMAFFNVGRPSVREALA).

It belongs to the NanR family.

Transcriptional repressor that controls expression of the genes required for the catabolism of sialic acids. This is HTH-type transcriptional repressor NanR from Escherichia coli O45:K1 (strain S88 / ExPEC).